A 628-amino-acid polypeptide reads, in one-letter code: Chaperone protein HtpG (628 aa).

Residues M1 to R337 are a; substrate-binding. The tract at residues E338–K554 is b. Residues M555–R628 form a c region.

This sequence belongs to the heat shock protein 90 family. Homodimer.

The protein localises to the cytoplasm. In terms of biological role, molecular chaperone. Has ATPase activity. This Francisella tularensis subsp. novicida (strain U112) protein is Chaperone protein HtpG.